Consider the following 136-residue polypeptide: Protein PsiE (136 aa).

4 helical membrane passes run isoleucine 15–leucine 35, tyrosine 55–valine 75, phenylalanine 82–isoleucine 102, and proline 108–cysteine 128.

It belongs to the PsiE family.

Its subcellular location is the cell inner membrane. This chain is Protein PsiE, found in Salmonella arizonae (strain ATCC BAA-731 / CDC346-86 / RSK2980).